Here is a 180-residue protein sequence, read N- to C-terminus: Adenine phosphoribosyltransferase (180 aa).

This sequence belongs to the purine/pyrimidine phosphoribosyltransferase family. In terms of assembly, homodimer.

The protein resides in the cytoplasm. The enzyme catalyses AMP + diphosphate = 5-phospho-alpha-D-ribose 1-diphosphate + adenine. It participates in purine metabolism; AMP biosynthesis via salvage pathway; AMP from adenine: step 1/1. In terms of biological role, catalyzes a salvage reaction resulting in the formation of AMP, that is energically less costly than de novo synthesis. The sequence is that of Adenine phosphoribosyltransferase from Mannheimia succiniciproducens (strain KCTC 0769BP / MBEL55E).